A 218-amino-acid polypeptide reads, in one-letter code: MAFKDTFNKMISYFDTDEVNEVEEDVAASTDNVIPRSQQSVRASSHPKQEPRNNHVQQDHQARSQEQTRSQMHPKHGTSERYYQQSQPKEGHEMVDRRKRMSTSSIANRREQYQQSTCSDQTTIALKYPRKYEDAQEIVDLLIVNECVLIDFQFMLDAQARRCLDFIDGASKVLYGSLQKVGSSMYLLAPSNVSVNIEEMTIPHTTQDIGFDFDMKRR.

The interval 25-115 is disordered; the sequence is DVAASTDNVI…IANRREQYQQ (91 aa). Residues 29–43 show a composition bias toward polar residues; it reads STDNVIPRSQQSVRA. A compositionally biased stretch (basic and acidic residues) spans 47 to 63; sequence PKQEPRNNHVQQDHQAR. Positions 102-115 are enriched in polar residues; that stretch reads STSSIANRREQYQQ.

Belongs to the SepF family. As to quaternary structure, homodimer. Interacts with FtsZ.

Its subcellular location is the cytoplasm. In terms of biological role, cell division protein that is part of the divisome complex and is recruited early to the Z-ring. Probably stimulates Z-ring formation, perhaps through the cross-linking of FtsZ protofilaments. Its function overlaps with FtsA. This Streptococcus pyogenes serotype M5 (strain Manfredo) protein is Cell division protein SepF.